The following is a 429-amino-acid chain: CBL-interacting serine/threonine-protein kinase 7 (429 aa).

The Protein kinase domain occupies 25–280; it reads YELGRRLGSG…IETVMKTNWF (256 aa). Residues 31-39 and K54 contribute to the ATP site; that span reads LGSGSFAKV. Catalysis depends on D149, which acts as the Proton acceptor. The segment at 167–195 is activation loop; that stretch reads DFGLSALPEHLQNGLLHTACGTPAYTAPE. S171 carries the phosphoserine modification. Phosphothreonine is present on T184. Residues 302-326 enclose the NAF domain; sequence SSVNSITAFDLISLSSGLDLSGLFE. The tract at residues 330 to 363 is PPI; it reads KKERRFTAKVSGVEVEEKAKMIGEKLGYVVKKKM.

It belongs to the protein kinase superfamily. CAMK Ser/Thr protein kinase family. SNF1 subfamily. Interacts with CBL1, CBL2 and CBL3. Mn(2+) is required as a cofactor. Autophosphorylated. In terms of tissue distribution, strongly expressed in leaves, but barely expressed in roots, stems or flowers.

The catalysed reaction is L-seryl-[protein] + ATP = O-phospho-L-seryl-[protein] + ADP + H(+). The enzyme catalyses L-threonyl-[protein] + ATP = O-phospho-L-threonyl-[protein] + ADP + H(+). Its function is as follows. CIPK serine-threonine protein kinases interact with CBL proteins. Binding of a CBL protein to the regulatory NAF domain of CIPK protein lead to the activation of the kinase in a calcium-dependent manner. Phosphorylates the rice sucrose synthase (SuSy) in vitro in an allosteric manner. Involved in cold response. The chain is CBL-interacting serine/threonine-protein kinase 7 (CIPK7) from Arabidopsis thaliana (Mouse-ear cress).